The chain runs to 238 residues: 15,16-dihydrobiliverdin:ferredoxin oxidoreductase (238 aa).

Belongs to the HY2 family.

It carries out the reaction 15,16-dihydrobiliverdin + oxidized 2[4Fe-4S]-[ferredoxin] = biliverdin IXalpha + reduced 2[4Fe-4S]-[ferredoxin] + 2 H(+). Its function is as follows. Catalyzes the two-electron reduction of biliverdin IX-alpha at the C15 methine bridge. This is 15,16-dihydrobiliverdin:ferredoxin oxidoreductase from Prochlorococcus marinus (strain MIT 9211).